We begin with the raw amino-acid sequence, 296 residues long: Dof zinc finger protein DOF3.7 (296 aa).

The interval 41-69 is disordered; the sequence is NTRPNATASNGGSGGNTNNTATMETRKAR. Low complexity predominate over residues 45-62; the sequence is NATASNGGSGGNTNNTAT. The Dof-type zinc-finger motif lies at 74–128; it reads VNCPRCNSTNTKFCYYNNYSLTQPRYFCKGCRRYWTEGGSLRNVPVGGSSRKNKR. Residues cysteine 76, cysteine 79, cysteine 101, and cysteine 104 each contribute to the Zn(2+) site. The tract at residues 115-146 is disordered; that stretch reads RNVPVGGSSRKNKRSSTPLASPSNPKLPDLNP. The segment covering 129-138 has biased composition (polar residues); that stretch reads SSTPLASPSN.

As to expression, expressed in the phloem of the mother plant, including in roots, stem, leaves and flowers, but not present in the seed and embryo. In maturing siliques, found all through the funiculus connecting the placenta to the ovule, but not in the ovule.

The protein localises to the nucleus. In terms of biological role, transcription factor specifically involved in the maternal control of seed germination. Regulates transcription by binding to a 5'-AA[AG]G-3' consensus core sequence. May ensure the inactivity of a component that would be activated to trigger germination as a consequence of red light perception. This chain is Dof zinc finger protein DOF3.7 (DOF3.7), found in Arabidopsis thaliana (Mouse-ear cress).